The primary structure comprises 186 residues: Peptidyl-tRNA hydrolase (186 aa).

Residue tyrosine 14 participates in tRNA binding. The Proton acceptor role is filled by histidine 19. TRNA-binding residues include phenylalanine 65, asparagine 67, and asparagine 113.

The protein belongs to the PTH family. Monomer.

The protein resides in the cytoplasm. It catalyses the reaction an N-acyl-L-alpha-aminoacyl-tRNA + H2O = an N-acyl-L-amino acid + a tRNA + H(+). Hydrolyzes ribosome-free peptidyl-tRNAs (with 1 or more amino acids incorporated), which drop off the ribosome during protein synthesis, or as a result of ribosome stalling. In terms of biological role, catalyzes the release of premature peptidyl moieties from peptidyl-tRNA molecules trapped in stalled 50S ribosomal subunits, and thus maintains levels of free tRNAs and 50S ribosomes. The polypeptide is Peptidyl-tRNA hydrolase (Limosilactobacillus reuteri (strain DSM 20016) (Lactobacillus reuteri)).